A 279-amino-acid polypeptide reads, in one-letter code: Urease accessory protein UreD (279 aa).

It belongs to the UreD family. UreD, UreF and UreG form a complex that acts as a GTP-hydrolysis-dependent molecular chaperone, activating the urease apoprotein by helping to assemble the nickel containing metallocenter of UreC. The UreE protein probably delivers the nickel.

It is found in the cytoplasm. Required for maturation of urease via the functional incorporation of the urease nickel metallocenter. The polypeptide is Urease accessory protein UreD (Paracoccus denitrificans (strain Pd 1222)).